The primary structure comprises 87 residues: Small ribosomal subunit protein bS16 (87 aa).

The protein belongs to the bacterial ribosomal protein bS16 family.

The polypeptide is Small ribosomal subunit protein bS16 (Desulfatibacillum aliphaticivorans).